The primary structure comprises 589 residues: Serine/threonine-protein kinase STE7 homolog (589 aa).

Positions 1–18 are enriched in basic and acidic residues; that stretch reads MTRTTRIDTQEATKHKDL. Disordered regions lie at residues 1–162 and 185–233; these read MTRT…DPDN and RQHY…ASSQ. Residues 24–33 are compositionally biased toward low complexity; that stretch reads PLSLSSNPNP. Polar residues predominate over residues 57–69; it reads VKSTSGSLRSSDM. A compositionally biased stretch (low complexity) spans 92–121; sequence PTASSSATSTPTSNITGSSSASSIQFAQKS. Polar residues-rich tracts occupy residues 127 to 136 and 144 to 162; these read IVSQTLSRPS and SGYS…DPDN. Positions 185-203 are enriched in basic residues; sequence RQHYQNSHHHLPTTNRKRQ. Positions 206-220 are enriched in low complexity; that stretch reads ISSISPTKSSAASSS. A compositionally biased stretch (polar residues) spans 221 to 233; that stretch reads LEPQIQSLPASSQ. The Protein kinase domain occupies 249 to 565; sequence LLTLKQLGSG…QLLEDKEHFF (317 aa). ATP is bound by residues 255–263 and K278; that span reads LGSGNSGSV. The Proton acceptor role is filled by D374. S402 carries the post-translational modification Phosphoserine. T408 is modified (phosphothreonine). Residues 473–499 form a disordered region; it reads IAAERNGQNSPSRSRKNKQKGNGYNSY.

It belongs to the protein kinase superfamily. STE Ser/Thr protein kinase family. MAP kinase kinase subfamily.

It catalyses the reaction L-seryl-[protein] + ATP = O-phospho-L-seryl-[protein] + ADP + H(+). It carries out the reaction L-threonyl-[protein] + ATP = O-phospho-L-threonyl-[protein] + ADP + H(+). The enzyme catalyses L-tyrosyl-[protein] + ATP = O-phospho-L-tyrosyl-[protein] + ADP + H(+). This is Serine/threonine-protein kinase STE7 homolog (HST7) from Candida albicans (strain SC5314 / ATCC MYA-2876) (Yeast).